An 88-amino-acid polypeptide reads, in one-letter code: Small ribosomal subunit protein eS21 (88 aa).

It belongs to the eukaryotic ribosomal protein eS21 family. In terms of assembly, component of the 40S small ribosomal subunit.

It localises to the cytoplasm. The protein resides in the cytosol. Its subcellular location is the rough endoplasmic reticulum. The sequence is that of Small ribosomal subunit protein eS21 (rps-21) from Caenorhabditis elegans.